Consider the following 337-residue polypeptide: Quinolinate synthase (337 aa).

His40 and Ser57 together coordinate iminosuccinate. A [4Fe-4S] cluster-binding site is contributed by Cys102. Residues 128 to 130 and Ser145 contribute to the iminosuccinate site; that span reads YVN. Cys189 contributes to the [4Fe-4S] cluster binding site. Iminosuccinate contacts are provided by residues 215-217 and Thr243; that span reads HPE. Cys288 is a [4Fe-4S] cluster binding site.

It belongs to the quinolinate synthase family. Type 2 subfamily. [4Fe-4S] cluster serves as cofactor.

The protein localises to the cytoplasm. The catalysed reaction is iminosuccinate + dihydroxyacetone phosphate = quinolinate + phosphate + 2 H2O + H(+). The protein operates within cofactor biosynthesis; NAD(+) biosynthesis; quinolinate from iminoaspartate: step 1/1. In terms of biological role, catalyzes the condensation of iminoaspartate with dihydroxyacetone phosphate to form quinolinate. The protein is Quinolinate synthase of Mycobacterium sp. (strain JLS).